The following is a 169-amino-acid chain: ATP synthase subunit b (169 aa).

The helical transmembrane segment at 12–32 (PSVGLIFWKTVAFLIFLYILY) threads the bilayer. Residues 69–107 (AENEEARREAEQKAQQILREARDSAEELREEEKAKTRRE) are disordered. The segment covering 87–107 (REARDSAEELREEEKAKTRRE) has biased composition (basic and acidic residues).

It belongs to the ATPase B chain family. As to quaternary structure, F-type ATPases have 2 components, F(1) - the catalytic core - and F(0) - the membrane proton channel. F(1) has five subunits: alpha(3), beta(3), gamma(1), delta(1), epsilon(1). F(0) has three main subunits: a(1), b(2) and c(10-14). The alpha and beta chains form an alternating ring which encloses part of the gamma chain. F(1) is attached to F(0) by a central stalk formed by the gamma and epsilon chains, while a peripheral stalk is formed by the delta and b chains.

Its subcellular location is the cell inner membrane. In terms of biological role, f(1)F(0) ATP synthase produces ATP from ADP in the presence of a proton or sodium gradient. F-type ATPases consist of two structural domains, F(1) containing the extramembraneous catalytic core and F(0) containing the membrane proton channel, linked together by a central stalk and a peripheral stalk. During catalysis, ATP synthesis in the catalytic domain of F(1) is coupled via a rotary mechanism of the central stalk subunits to proton translocation. Functionally, component of the F(0) channel, it forms part of the peripheral stalk, linking F(1) to F(0). This is ATP synthase subunit b from Salinibacter ruber (strain DSM 13855 / M31).